A 586-amino-acid chain; its full sequence is Cryptochrome-1 (586 aa).

Residues 3 to 132 (VNAVHWFRKG…EVIVRISHTL (130 aa)) form the Photolyase/cryptochrome alpha/beta domain. Lys11 is covalently cross-linked (Glycyl lysine isopeptide (Lys-Gly) (interchain with G-Cter in ubiquitin)). The LIR 1 signature appears at 50 to 54 (NRWRF). Ser71 bears the Phosphoserine; by AMPK mark. An LIR 2 motif is present at residues 82-87 (DVFPRL). Lys107 participates in a covalent cross-link: Glycyl lysine isopeptide (Lys-Gly) (interchain with G-Cter in ubiquitin). Residues 151–156 (KRFQTL) carry the LIR 3 motif. Lys159 is covalently cross-linked (Glycyl lysine isopeptide (Lys-Gly) (interchain with G-Cter in ubiquitin)). At Ser247 the chain carries Phosphoserine; by MAPK. Ser252 is an FAD binding site. Short sequence motifs (LIR) lie at residues 255 to 260 (LRFGCL) and 271 to 276 (DLYKKV). Position 280 is a phosphoserine; by AMPK (Ser280). The LIR 6 motif lies at 285–290 (SLYGQL). Gln289 is a binding site for FAD. Lys329 participates in a covalent cross-link: Glycyl lysine isopeptide (Lys-Gly) (interchain with G-Cter in ubiquitin). The LIR 7 signature appears at 335–339 (TGFPW). His355 contacts FAD. Residues 371-470 (WISWEEGMKV…LIGINYPKPM (100 aa)) form a required for inhibition of CLOCK-BMAL1-mediated transcription region. The LIR 8 motif lies at 379–384 (KVFEEL). FAD is bound at residue 387-389 (DAD). 3 consecutive short sequence motifs (LIR) follow at residues 395 to 400 (GSWMWL), 411 to 416 (HCYCPV), and 430 to 435 (RRYLPV). The segment at 471–493 (VNHAEASRLNIERMKQIYQQLSR) is interaction with TIMELESS. Lys485 is covalently cross-linked (Glycyl lysine isopeptide (Lys-Gly) (interchain with G-Cter in ubiquitin)). Short sequence motifs (LIR) lie at residues 486 to 491 (QIYQQL) and 492 to 497 (SRYRGL). The segment covering 545–559 (QQTHLLKQGRSSMGT) has biased composition (polar residues). The tract at residues 545-586 (QQTHLLKQGRSSMGTGLSGGKRPSQEEDTQSIGPKVQRQSTN) is disordered. Lys565 is covalently cross-linked (Glycyl lysine isopeptide (Lys-Gly) (interchain with G-Cter in ubiquitin)). A Phosphoserine modification is found at Ser568.

It belongs to the DNA photolyase class-1 family. As to quaternary structure, component of the circadian core oscillator, which includes the CRY proteins, CLOCK or NPAS2, BMAL1 or BMAL2, CSNK1D and/or CSNK1E, TIMELESS, and the PER proteins. Interacts directly with TIMELESS. Interacts directly with PER1, PER2 and PER3; interaction with PER2 inhibits its ubiquitination and vice versa. Interacts with FBXL21. Interacts with FBXL3. Interacts with CLOCK-BMAL1 independently of PER2 and DNA. Interacts with HDAC1, HDAC2 and SIN3B. Interacts with nuclear receptors AR, NR1D1, NR3C1/GR, RORA and RORC; the interaction with at least NR3C1/GR is ligand dependent. Interacts with PRKDC. Interacts with the G protein subunit alpha GNAS; the interaction may block GPCR-mediated regulation of cAMP concentrations. Interacts with PRMT5. Interacts with EZH2. Interacts with MYBBP1A, DOCK7, HNRNPU, RPL7A, RPL8 and RPS3. Interacts with PPP5C (via TPR repeats). Interacts with MAP1LC3B. Interacts with CLOCK. Interacts with BMAL1. Interacts weakly with HDAC3; this interaction is enhanced in the presence of FBXL3. Interacts with TRIM28, KCTD5 and DDB1. Interacts with FOXO1. Interacts with DTL and DDB1-CUL4A complex. Interacts with HNF4A. Interacts with PSMD2 in a KDM8-dependent manner. Interacts with KDM8 in a FBXL3-dependent manner. Interacts with PPARG in a ligand-dependent manner. Interacts with PPARD (via domain NR LBD) and NR1I2 (via domain NR LBD) in a ligand-dependent manner. Interacts with PPARA, NR1I3 and VDR. Requires FAD as cofactor. (6R)-5,10-methylene-5,6,7,8-tetrahydrofolate serves as cofactor. In terms of processing, phosphorylation on Ser-247 by MAPK is important for the inhibition of CLOCK-BMAL1-mediated transcriptional activity. Phosphorylation by CSNK1E requires interaction with PER1 or PER2. Phosphorylation at Ser-71 and Ser-280 by AMPK decreases protein stability. Phosphorylation at Ser-568 exhibits a robust circadian rhythm with a peak at CT8, increases protein stability, prevents SCF(FBXL3)-mediated degradation and is antagonized by interaction with PRKDC. Ubiquitinated by the SCF(FBXL3) and SCF(FBXL21) complexes, regulating the balance between degradation and stabilization. The SCF(FBXL3) complex is mainly nuclear and mediates ubiquitination and subsequent degradation of CRY1. In contrast, cytoplasmic SCF(FBXL21) complex-mediated ubiquitination leads to stabilize CRY1 and counteract the activity of the SCF(FBXL3) complex. The SCF(FBXL3) and SCF(FBXL21) complexes probably mediate ubiquitination at different Lys residues. Ubiquitination at Lys-11 and Lys-107 are specifically ubiquitinated by the SCF(FBXL21) complex but not by the SCF(FBXL3) complex. Ubiquitination may be inhibited by PER2. Deubiquitinated by USP7. Post-translationally, undergoes autophagy-mediated degradation in the liver in a time-dependent manner. Autophagic degradation of CRY1 (an inhibitor of gluconeogenesis) occurs during periods of reduced feeding allowing induction of gluconeogenesis and maintenance of blood glucose levels.

It is found in the cytoplasm. Its subcellular location is the nucleus. Functionally, transcriptional repressor which forms a core component of the circadian clock. The circadian clock, an internal time-keeping system, regulates various physiological processes through the generation of approximately 24 hour circadian rhythms in gene expression, which are translated into rhythms in metabolism and behavior. It is derived from the Latin roots 'circa' (about) and 'diem' (day) and acts as an important regulator of a wide array of physiological functions including metabolism, sleep, body temperature, blood pressure, endocrine, immune, cardiovascular, and renal function. Consists of two major components: the central clock, residing in the suprachiasmatic nucleus (SCN) of the brain, and the peripheral clocks that are present in nearly every tissue and organ system. Both the central and peripheral clocks can be reset by environmental cues, also known as Zeitgebers (German for 'timegivers'). The predominant Zeitgeber for the central clock is light, which is sensed by retina and signals directly to the SCN. The central clock entrains the peripheral clocks through neuronal and hormonal signals, body temperature and feeding-related cues, aligning all clocks with the external light/dark cycle. Circadian rhythms allow an organism to achieve temporal homeostasis with its environment at the molecular level by regulating gene expression to create a peak of protein expression once every 24 hours to control when a particular physiological process is most active with respect to the solar day. Transcription and translation of core clock components (CLOCK, NPAS2, BMAL1, BMAL2, PER1, PER2, PER3, CRY1 and CRY2) plays a critical role in rhythm generation, whereas delays imposed by post-translational modifications (PTMs) are important for determining the period (tau) of the rhythms (tau refers to the period of a rhythm and is the length, in time, of one complete cycle). A diurnal rhythm is synchronized with the day/night cycle, while the ultradian and infradian rhythms have a period shorter and longer than 24 hours, respectively. Disruptions in the circadian rhythms contribute to the pathology of cardiovascular diseases, cancer, metabolic syndromes and aging. A transcription/translation feedback loop (TTFL) forms the core of the molecular circadian clock mechanism. Transcription factors, CLOCK or NPAS2 and BMAL1 or BMAL2, form the positive limb of the feedback loop, act in the form of a heterodimer and activate the transcription of core clock genes and clock-controlled genes (involved in key metabolic processes), harboring E-box elements (5'-CACGTG-3') within their promoters. The core clock genes: PER1/2/3 and CRY1/2 which are transcriptional repressors form the negative limb of the feedback loop and interact with the CLOCK|NPAS2-BMAL1|BMAL2 heterodimer inhibiting its activity and thereby negatively regulating their own expression. This heterodimer also activates nuclear receptors NR1D1/2 and RORA/B/G, which form a second feedback loop and which activate and repress BMAL1 transcription, respectively. CRY1 and CRY2 have redundant functions but also differential and selective contributions at least in defining the pace of the SCN circadian clock and its circadian transcriptional outputs. More potent transcriptional repressor in cerebellum and liver than CRY2, though more effective in lengthening the period of the SCN oscillator. On its side, CRY2 seems to play a critical role in tuning SCN circadian period by opposing the action of CRY1. With CRY2, is dispensable for circadian rhythm generation but necessary for the development of intercellular networks for rhythm synchrony. Capable of translocating circadian clock core proteins such as PER proteins to the nucleus. Interacts with CLOCK-BMAL1 independently of PER proteins and is found at CLOCK-BMAL1-bound sites, suggesting that CRY may act as a molecular gatekeeper to maintainCLOCK-BMAL1 in a poised and repressed state until the proper time for transcriptional activation. Represses the CLOCK-BMAL1 induced transcription of BHLHE40/DEC1, ATF4, MTA1, KLF10 and NAMPT. May repress circadian target genes expression in collaboration with HDAC1 and HDAC2 through histone deacetylation. Mediates the clock-control activation of ATR and modulates ATR-mediated DNA damage checkpoint. In liver, mediates circadian regulation of cAMP signaling and gluconeogenesis by binding to membrane-coupled G proteins and blocking glucagon-mediated increases in intracellular cAMP concentrations and CREB1 phosphorylation. Inhibits hepatic gluconeogenesis by decreasing nuclear FOXO1 levels that down-regulates gluconeogenic gene expression. Besides its role in the maintenance of the circadian clock, is also involved in the regulation of other processes. Represses glucocorticoid receptor NR3C1/GR-induced transcriptional activity by binding to glucocorticoid response elements (GREs). Plays a key role in glucose and lipid metabolism modulation, in part, through the transcriptional regulation of genes involved in these pathways, such as LEP or ACSL4. Represses PPARD and its target genes in the skeletal muscle and limits exercise capacity. Plays an essential role in the generation of circadian rhythms in the retina. Represses the transcriptional activity of NR1I2. In Macaca fascicularis (Crab-eating macaque), this protein is Cryptochrome-1 (CRY1).